The following is a 329-amino-acid chain: Elongation factor Ts (329 aa).

The involved in Mg(2+) ion dislocation from EF-Tu stretch occupies residues 79–82; that stretch reads TDFV.

It belongs to the EF-Ts family.

It localises to the cytoplasm. In terms of biological role, associates with the EF-Tu.GDP complex and induces the exchange of GDP to GTP. It remains bound to the aminoacyl-tRNA.EF-Tu.GTP complex up to the GTP hydrolysis stage on the ribosome. The protein is Elongation factor Ts of Phocaeicola vulgatus (strain ATCC 8482 / DSM 1447 / JCM 5826 / CCUG 4940 / NBRC 14291 / NCTC 11154) (Bacteroides vulgatus).